A 540-amino-acid polypeptide reads, in one-letter code: uncharacterized protein (540 aa).

Residues 1–58 constitute a chloroplast transit peptide; it reads MAVSAFRGTRLPLFHHSQFPVARTVSGTSKKMIGARNFKGFVLTAQYSQTQDLFTSRL. The Protein kinase domain maps to 195-533; sequence YVDPTPIASA…ISIASNKRTN (339 aa). ATP is bound by residues 201 to 209 and K224; that span reads IASASIAQV. The active-site Proton acceptor is D362.

Belongs to the protein kinase superfamily. ADCK protein kinase family.

It is found in the plastid. It localises to the chloroplast. Its subcellular location is the plastoglobule. This is an uncharacterized protein from Arabidopsis thaliana (Mouse-ear cress).